A 505-amino-acid chain; its full sequence is Monocarboxylate transporter 6 (505 aa).

At 1–17 (MPQALERADGSWAWVVL) the chain is on the cytoplasmic side. Residues 18–38 (LATMVTQGLTLGFPTCIGIFF) traverse the membrane as a helical segment. Residues 39–53 (TELQWEFQASNSETS) lie on the Extracellular side of the membrane. The chain crosses the membrane as a helical span at residues 54-74 (WFPSILTAVLHMAGPLCSILV). The Cytoplasmic portion of the chain corresponds to 75–80 (GRFGCR). A helical transmembrane segment spans residues 81–101 (VTVMLGGVLASLGMVASSFSH). Residues 102 to 110 (NLSQLYFTA) lie on the Extracellular side of the membrane. A helical membrane pass occupies residues 111–131 (GFITGLGMCFSFQSSITVLGF). The Cytoplasmic portion of the chain corresponds to 132 to 137 (YFVRRR). The chain crosses the membrane as a helical span at residues 138–158 (VLANALASMGVSLGITLWPLL). The Extracellular portion of the chain corresponds to 159-171 (SRYLLENLGWRGT). The chain crosses the membrane as a helical span at residues 172 to 192 (FLVFGGIFLHCCICGAIIRPV). The Cytoplasmic portion of the chain corresponds to 193–239 (ATSVAPETKECPPPPPETPALGCLAACGRTIQRHLAFDILRHNTGYC). The helical transmembrane segment at 240–260 (VYILGVMWSVLGFPLPQVFLV) threads the bilayer. The Extracellular segment spans residues 261 to 274 (PYAMWHSVDEQQAA). The chain crosses the membrane as a helical span at residues 275-295 (LLISIIGFSNIFLRPLAGLMA). At 296-305 (GRPAFASHRK) the chain is on the cytoplasmic side. Residues 306–326 (YLFSLALLLNGLTNLVCAASG) form a helical membrane-spanning segment. Residues 327-329 (DFW) lie on the Extracellular side of the membrane. A helical membrane pass occupies residues 330–350 (VLVGYCLAYSVSMSGIGALIF). At 351–367 (QVLMDIVPMDQFPRALG) the chain is on the cytoplasmic side. The helical transmembrane segment at 368–388 (LFTVLDGLAFLISPPLAGLLL) threads the bilayer. The Extracellular segment spans residues 389–396 (DATNNFSY). Residues 397 to 417 (VFYMSSFFLISAALFMGGSFY) form a helical membrane-spanning segment. Residues 418 to 505 (ALQKKEQGKQ…QTALGWNSPT (88 aa)) are Cytoplasmic-facing. A disordered region spans residues 443–464 (KDGPGKQRSPEIMCQSSRQPRP).

Belongs to the major facilitator superfamily. Monocarboxylate porter (TC 2.A.1.13) family. As to expression, highly expressed in kidney.

The protein localises to the cell membrane. Functionally, proton-linked monocarboxylate transporter. Catalyzes the rapid transport across the plasma membrane of many monocarboxylates such as lactate, pyruvate, branched-chain oxo acids derived from leucine, valine and isoleucine, and the ketone bodies acetoacetate, beta-hydroxybutyrate and acetate. This is Monocarboxylate transporter 6 (SLC16A5) from Homo sapiens (Human).